Reading from the N-terminus, the 182-residue chain is UPF0149 protein CGSHiEE_07975 (182 aa).

This sequence belongs to the UPF0149 family.

The polypeptide is UPF0149 protein CGSHiEE_07975 (Haemophilus influenzae (strain PittEE)).